A 294-amino-acid chain; its full sequence is Pyridoxal 5'-phosphate synthase subunit PdxS (294 aa).

D24 is a binding site for D-ribose 5-phosphate. K81 (schiff-base intermediate with D-ribose 5-phosphate) is an active-site residue. Residue G153 coordinates D-ribose 5-phosphate. R165 provides a ligand contact to D-glyceraldehyde 3-phosphate. D-ribose 5-phosphate-binding positions include G214 and 235–236; that span reads GS.

Belongs to the PdxS/SNZ family. In terms of assembly, homohexamer and homododecamer. In the presence of PdxT, forms a dodecamer of heterodimers.

It catalyses the reaction aldehydo-D-ribose 5-phosphate + D-glyceraldehyde 3-phosphate + L-glutamine = pyridoxal 5'-phosphate + L-glutamate + phosphate + 3 H2O + H(+). It functions in the pathway cofactor biosynthesis; pyridoxal 5'-phosphate biosynthesis. Its function is as follows. Catalyzes the formation of pyridoxal 5'-phosphate from ribose 5-phosphate (RBP), glyceraldehyde 3-phosphate (G3P) and ammonia. The ammonia is provided by the PdxT subunit. Can also use ribulose 5-phosphate and dihydroxyacetone phosphate as substrates, resulting from enzyme-catalyzed isomerization of RBP and G3P, respectively. This chain is Pyridoxal 5'-phosphate synthase subunit PdxS, found in Geobacillus kaustophilus (strain HTA426).